Here is a 211-residue protein sequence, read N- to C-terminus: Adenylate kinase (211 aa).

Residue 13-18 (GAGKGT) participates in ATP binding. The segment at 33–62 (STGDILRVAVANKTKLGLEAKKFMDAGQLV) is NMP. AMP-binding positions include Thr34, Arg39, 60 to 62 (QLV), 88 to 91 (GFPR), and Gln95. Residues 129–161 (GRRTSKVTGKIYHIKFNPPVDEKPEDLVQRADD) are LID. ATP is bound by residues Arg130 and 139 to 140 (IY). 2 residues coordinate AMP: Arg158 and Arg169. Residue Lys197 coordinates ATP.

The protein belongs to the adenylate kinase family. As to quaternary structure, monomer.

Its subcellular location is the cytoplasm. It catalyses the reaction AMP + ATP = 2 ADP. It functions in the pathway purine metabolism; AMP biosynthesis via salvage pathway; AMP from ADP: step 1/1. Its function is as follows. Catalyzes the reversible transfer of the terminal phosphate group between ATP and AMP. Plays an important role in cellular energy homeostasis and in adenine nucleotide metabolism. The chain is Adenylate kinase from Fusobacterium nucleatum subsp. nucleatum (strain ATCC 25586 / DSM 15643 / BCRC 10681 / CIP 101130 / JCM 8532 / KCTC 2640 / LMG 13131 / VPI 4355).